Here is a 567-residue protein sequence, read N- to C-terminus: Urease subunit alpha (567 aa).

The region spanning glycine 129–phenylalanine 567 is the Urease domain. Ni(2+) contacts are provided by histidine 134, histidine 136, and lysine 217. Lysine 217 is subject to N6-carboxylysine. Position 219 (histidine 219) interacts with substrate. Residues histidine 246 and histidine 272 each contribute to the Ni(2+) site. The Proton donor role is filled by histidine 320. Aspartate 360 contacts Ni(2+).

This sequence belongs to the metallo-dependent hydrolases superfamily. Urease alpha subunit family. Heterotrimer of UreA (gamma), UreB (beta) and UreC (alpha) subunits. Three heterotrimers associate to form the active enzyme. The cofactor is Ni cation. In terms of processing, carboxylation allows a single lysine to coordinate two nickel ions.

The protein resides in the cytoplasm. The catalysed reaction is urea + 2 H2O + H(+) = hydrogencarbonate + 2 NH4(+). Its pathway is nitrogen metabolism; urea degradation; CO(2) and NH(3) from urea (urease route): step 1/1. The polypeptide is Urease subunit alpha (Blochmanniella floridana).